We begin with the raw amino-acid sequence, 180 residues long: Putative manganese efflux pump MntP (180 aa).

6 helical membrane-spanning segments follow: residues 6 to 26, 34 to 54, 67 to 87, 103 to 123, 130 to 150, and 159 to 179; these read LFAL…GIGI, IALI…LGWY, ASIA…WDTI, GGLL…GFTL, LVLA…AGLT, and IGER…VKLF.

This sequence belongs to the MntP (TC 9.B.29) family.

It localises to the cell membrane. Probably functions as a manganese efflux pump. The chain is Putative manganese efflux pump MntP from Desulforamulus reducens (strain ATCC BAA-1160 / DSM 100696 / MI-1) (Desulfotomaculum reducens).